Consider the following 200-residue polypeptide: ATP-dependent Clp protease proteolytic subunit 2 (200 aa).

Ser96 serves as the catalytic Nucleophile. His121 is an active-site residue.

This sequence belongs to the peptidase S14 family. In terms of assembly, fourteen ClpP subunits assemble into 2 heptameric rings which stack back to back to give a disk-like structure with a central cavity, resembling the structure of eukaryotic proteasomes.

The protein localises to the cytoplasm. The catalysed reaction is Hydrolysis of proteins to small peptides in the presence of ATP and magnesium. alpha-casein is the usual test substrate. In the absence of ATP, only oligopeptides shorter than five residues are hydrolyzed (such as succinyl-Leu-Tyr-|-NHMec, and Leu-Tyr-Leu-|-Tyr-Trp, in which cleavage of the -Tyr-|-Leu- and -Tyr-|-Trp bonds also occurs).. Functionally, cleaves peptides in various proteins in a process that requires ATP hydrolysis. Has a chymotrypsin-like activity. Plays a major role in the degradation of misfolded proteins. In Synechococcus sp. (strain JA-2-3B'a(2-13)) (Cyanobacteria bacterium Yellowstone B-Prime), this protein is ATP-dependent Clp protease proteolytic subunit 2.